A 59-amino-acid chain; its full sequence is Large ribosomal subunit protein bL32 (59 aa).

It belongs to the bacterial ribosomal protein bL32 family.

The sequence is that of Large ribosomal subunit protein bL32 from Lactiplantibacillus plantarum (strain ATCC BAA-793 / NCIMB 8826 / WCFS1) (Lactobacillus plantarum).